The primary structure comprises 195 residues: Cholesin (195 aa).

The interval 1-78 (MAKHKRKGLE…KEEKKRLREA (78 aa)) is disordered. Composition is skewed to basic and acidic residues over residues 8–18 (GLEGTGKESKR) and 26–39 (ETPRTSEAGPDKET). Serine 41, serine 48, and serine 52 each carry phosphoserine. Over residues 53–77 (PEERRVLERKLKKERKKEEKKRLRE) the composition is skewed to basic and acidic residues. At serine 96 the chain carries Phosphoserine.

In terms of tissue distribution, secreted via exosomes, secreted from the instestine, secretion is induced by feeding and cholesterol absorption. Expressed in enterocytes.

It localises to the secreted. In terms of biological role, hormone secreted from the intestine in response to cholesterol, where it acts to inhibit cholesterol synthesis in the liver and VLDL secretion,leading to a reduction in circulating cholesterol levels. Acts through binding to its receptor, GPR146. This chain is Cholesin (Chlsn), found in Mus musculus (Mouse).